The primary structure comprises 164 residues: Cyanate hydratase (164 aa).

Catalysis depends on residues R90, E93, and S116.

Belongs to the cyanase family.

The catalysed reaction is cyanate + hydrogencarbonate + 3 H(+) = NH4(+) + 2 CO2. In terms of biological role, catalyzes the reaction of cyanate with bicarbonate to produce ammonia and carbon dioxide. The polypeptide is Cyanate hydratase (Vitis vinifera (Grape)).